The chain runs to 143 residues: Transcriptional regulator MraZ (143 aa).

SpoVT-AbrB domains follow at residues 5-47 (TYTP…PREE) and 76-119 (ADEQ…DAAA).

Belongs to the MraZ family. As to quaternary structure, forms oligomers.

The protein resides in the cytoplasm. It is found in the nucleoid. This chain is Transcriptional regulator MraZ, found in Corynebacterium diphtheriae (strain ATCC 700971 / NCTC 13129 / Biotype gravis).